Reading from the N-terminus, the 476-residue chain is Protein EARLY HEADING DATE 2 (476 aa).

Polar residues predominate over residues 1-13; that stretch reads MLLSDLSSDQEAT. Residues 1-27 form a disordered region; sequence MLLSDLSSDQEATGSNSHGGGGGGDRM. 2 consecutive C2H2-type zinc fingers follow at residues 106 to 128 and 156 to 186; these read FVCE…RRGH and YVCP…SRKH. 2 consecutive short sequence motifs (nuclear localization signal) follow at residues 124–131 and 178–185; these read HRRGHNLP and IKKHFSRK. Residues 191–214 form a C2H2-type 2; degenerate zinc finger; that stretch reads WRCERCGKRYAVHSDWKAHVKNCG. C193, C196, H209, C213, C220, C222, H235, and C239 together coordinate Zn(2+). The CCHC-type 2; atypical zinc finger occupies 218-241; the sequence is YRCDCGILFSRKDSLLTHRAFCDA. An SHR-binding region spans residues 228–240; that stretch reads RKDSLLTHRAFCD.

The protein resides in the nucleus. Functionally, transcription activator that acts as a flowering master switch in both long and short days, independently of the circadian clock. Promotes flowering upstream of HD1 by up-regulating FTL1, FTL4, FTL5, FTL6, EHD1, HD3A and RFT1. Seems to repress FTL11 expression. May recognize the consensus motif 5'-TTTGTCGTAAT-3' in target gene promoters. In Oryza sativa subsp. indica (Rice), this protein is Protein EARLY HEADING DATE 2.